We begin with the raw amino-acid sequence, 296 residues long: CRISPR-associated endonuclease Cas1 2 (296 aa).

Mn(2+) contacts are provided by glutamate 157, histidine 224, and aspartate 237.

Belongs to the CRISPR-associated endonuclease Cas1 family. In terms of assembly, homodimer, forms a heterotetramer with a Cas2 homodimer. Mg(2+) is required as a cofactor. Mn(2+) serves as cofactor.

In terms of biological role, CRISPR (clustered regularly interspaced short palindromic repeat), is an adaptive immune system that provides protection against mobile genetic elements (viruses, transposable elements and conjugative plasmids). CRISPR clusters contain spacers, sequences complementary to antecedent mobile elements, and target invading nucleic acids. CRISPR clusters are transcribed and processed into CRISPR RNA (crRNA). Acts as a dsDNA endonuclease. Involved in the integration of spacer DNA into the CRISPR cassette. The polypeptide is CRISPR-associated endonuclease Cas1 2 (Chlorobaculum tepidum (strain ATCC 49652 / DSM 12025 / NBRC 103806 / TLS) (Chlorobium tepidum)).